Here is a 588-residue protein sequence, read N- to C-terminus: Pectinesterase 4 (588 aa).

Positions 1 to 24 are cleaved as a signal peptide; the sequence is MIGKVVVSVASILLIVGVAIGVVA. N-linked (GlcNAc...) asparagine glycans are attached at residues N86, N206, and N342. Residues T353 and Q383 each contribute to the substrate site. D406 acts as the Proton donor in catalysis. D427 functions as the Nucleophile in the catalytic mechanism. Substrate contacts are provided by R496 and W498.

In the N-terminal section; belongs to the PMEI family. The protein in the C-terminal section; belongs to the pectinesterase family. In terms of tissue distribution, expressed in pollen grains and pollen tubes.

The protein localises to the secreted. It localises to the cell wall. It carries out the reaction [(1-&gt;4)-alpha-D-galacturonosyl methyl ester](n) + n H2O = [(1-&gt;4)-alpha-D-galacturonosyl](n) + n methanol + n H(+). It participates in glycan metabolism; pectin degradation; 2-dehydro-3-deoxy-D-gluconate from pectin: step 1/5. Its function is as follows. Acts in the modification of cell walls via demethylesterification of cell wall pectin. Plays an important role in growth of pollen tubes in female floral tissues, possibly via enhancing the interaction between the pollen tube and female floral tissues by modification of the cell walls. The polypeptide is Pectinesterase 4 (PME4) (Arabidopsis thaliana (Mouse-ear cress)).